The sequence spans 122 residues: Large ribosomal subunit protein uL14 (122 aa).

It belongs to the universal ribosomal protein uL14 family. Part of the 50S ribosomal subunit. Forms a cluster with proteins L3 and L19. In the 70S ribosome, L14 and L19 interact and together make contacts with the 16S rRNA in bridges B5 and B8.

Binds to 23S rRNA. Forms part of two intersubunit bridges in the 70S ribosome. In Cereibacter sphaeroides (strain ATCC 17029 / ATH 2.4.9) (Rhodobacter sphaeroides), this protein is Large ribosomal subunit protein uL14.